The primary structure comprises 443 residues: Na(+)-translocating NADH-quinone reductase subunit A (443 aa).

The protein belongs to the NqrA family. As to quaternary structure, composed of six subunits; NqrA, NqrB, NqrC, NqrD, NqrE and NqrF.

It catalyses the reaction a ubiquinone + n Na(+)(in) + NADH + H(+) = a ubiquinol + n Na(+)(out) + NAD(+). Its function is as follows. NQR complex catalyzes the reduction of ubiquinone-1 to ubiquinol by two successive reactions, coupled with the transport of Na(+) ions from the cytoplasm to the periplasm. NqrA to NqrE are probably involved in the second step, the conversion of ubisemiquinone to ubiquinol. This Mannheimia succiniciproducens (strain KCTC 0769BP / MBEL55E) protein is Na(+)-translocating NADH-quinone reductase subunit A.